We begin with the raw amino-acid sequence, 447 residues long: Acidic leucine-rich nuclear phosphoprotein 32-related protein (447 aa).

LRR repeat units follow at residues 49 to 70, 71 to 90, and 96 to 117; these read NLQH…PRLG, NLQK…EFLV, and SFCD…APLA. One can recognise an LRRCT domain in the interval 129-167; that stretch reads CPVTRLKDYRSRVFGLIKTLKYLDKTDAEGNERPESDDE. Residues 155–447 are disordered; it reads DAEGNERPES…EDDDDDDEER (293 aa). 2 stretches are compositionally biased toward acidic residues: residues 163–194 and 215–231; these read ESDD…EIDG and VDVD…DESE. Polar residues predominate over residues 232–242; that stretch reads QATGVNGTSYR. 5 stretches are compositionally biased toward acidic residues: residues 256–277, 284–309, 336–374, 397–415, and 433–447; these read VRED…DNDV, EDSE…EEVD, GDDD…EESG, PINE…DDLP, and DDDD…DEER.

Belongs to the ANP32 family.

The chain is Acidic leucine-rich nuclear phosphoprotein 32-related protein from Arabidopsis thaliana (Mouse-ear cress).